The primary structure comprises 358 residues: DNA replication and repair protein RecF (358 aa).

33–40 (GENGAGKT) serves as a coordination point for ATP.

This sequence belongs to the RecF family.

Its subcellular location is the cytoplasm. In terms of biological role, the RecF protein is involved in DNA metabolism; it is required for DNA replication and normal SOS inducibility. RecF binds preferentially to single-stranded, linear DNA. It also seems to bind ATP. This Deinococcus geothermalis (strain DSM 11300 / CIP 105573 / AG-3a) protein is DNA replication and repair protein RecF.